The chain runs to 372 residues: Saccharopine dehydrogenase [NAD(+), L-lysine-forming] (372 aa).

Residues R17 and K76 each contribute to the L-saccharopine site. The active-site Proton acceptor is the K76. H95 (proton donor) is an active-site residue. Q100 serves as a coordination point for L-saccharopine. R129 contributes to the NAD(+) binding site. L-saccharopine is bound by residues R130 and F134. Residues 202–203, D226, T230, Y250, and V277 each bind NAD(+); that span reads GR. A disulfide bridge connects residues C204 and C248. 278 to 280 lines the L-saccharopine pocket; the sequence is SAD. Position 317–320 (317–320) interacts with NAD(+); it reads IDHL. The Microbody targeting signal signature appears at 370–372; sequence SKL.

The protein belongs to the AlaDH/PNT family. In terms of assembly, monomer.

Its subcellular location is the peroxisome. The enzyme catalyses L-saccharopine + NAD(+) + H2O = L-lysine + 2-oxoglutarate + NADH + H(+). It participates in amino-acid biosynthesis; L-lysine biosynthesis via AAA pathway; L-lysine from L-alpha-aminoadipate (fungal route): step 3/3. Functionally, catalyzes the NAD(+)-dependent cleavage of saccharopine to L-lysine and 2-oxoglutarate, the final step in the alpha-aminoadipate (AAA) pathway for lysin biosynthesis. The sequence is that of Saccharopine dehydrogenase [NAD(+), L-lysine-forming] (LYS1) from Candida glabrata (strain ATCC 2001 / BCRC 20586 / JCM 3761 / NBRC 0622 / NRRL Y-65 / CBS 138) (Yeast).